A 172-amino-acid chain; its full sequence is MEYFNVGKIVNTQGLQGEMRVLSVSDFAEERFKKGSQLALFDDKDRFVQEVTIVSHRKQKHFDIIKLKDMYHINAIEKYKGYTLKVSKDNQGDLQEGEFYYHQIIGMAVYEKDRLIGYVKEILQPGANDVWVVKRQGKRDLLLPYIPPVVLNVDVPNKRVDVELMEGLDDED.

The region spanning 96–168 (EGEFYYHQII…RVDVELMEGL (73 aa)) is the PRC barrel domain.

This sequence belongs to the RimM family. Binds ribosomal protein uS19.

It is found in the cytoplasm. In terms of biological role, an accessory protein needed during the final step in the assembly of 30S ribosomal subunit, possibly for assembly of the head region. Essential for efficient processing of 16S rRNA. May be needed both before and after RbfA during the maturation of 16S rRNA. It has affinity for free ribosomal 30S subunits but not for 70S ribosomes. The sequence is that of Ribosome maturation factor RimM from Streptococcus pyogenes serotype M3 (strain ATCC BAA-595 / MGAS315).